A 121-amino-acid polypeptide reads, in one-letter code: Dihydroneopterin aldolase (121 aa).

Residues glutamate 22, tyrosine 54, and 73–74 contribute to the substrate site; that span reads IE. The Proton donor/acceptor role is filled by lysine 100.

Belongs to the DHNA family. Homooctamer. Four molecules assemble into a ring, and two rings come together to give a cylinder with a hole of at least 13 a diameter.

It catalyses the reaction 7,8-dihydroneopterin = 6-hydroxymethyl-7,8-dihydropterin + glycolaldehyde. The enzyme catalyses 7,8-dihydroneopterin = 7,8-dihydromonapterin. It functions in the pathway cofactor biosynthesis; tetrahydrofolate biosynthesis; 2-amino-4-hydroxy-6-hydroxymethyl-7,8-dihydropteridine diphosphate from 7,8-dihydroneopterin triphosphate: step 3/4. In terms of biological role, catalyzes the conversion of 7,8-dihydroneopterin to 6-hydroxymethyl-7,8-dihydropterin. Can also catalyze the epimerization of carbon 2' of dihydroneopterin to dihydromonapterin. The polypeptide is Dihydroneopterin aldolase (folB) (Staphylococcus epidermidis (strain ATCC 35984 / DSM 28319 / BCRC 17069 / CCUG 31568 / BM 3577 / RP62A)).